A 128-amino-acid chain; its full sequence is Transcription antitermination protein NusB (128 aa).

Belongs to the NusB family.

Functionally, involved in transcription antitermination. Required for transcription of ribosomal RNA (rRNA) genes. Binds specifically to the boxA antiterminator sequence of the ribosomal RNA (rrn) operons. This chain is Transcription antitermination protein NusB, found in Staphylococcus carnosus (strain TM300).